Consider the following 200-residue polypeptide: ATP synthase subunit s, mitochondrial (200 aa).

The N-terminal 25 residues, 1–25 (MMLFGKISQQLCGVKKLPWSCDSRY), are a transit peptide targeting the mitochondrion. The interval 1-61 (MMLFGKISQQ…SEWLLRCGAM (61 aa)) is N-terminal domain. Mg(2+) is bound at residue glycine 59. LRR repeat units follow at residues 62–87 (VRYH…KYKI), 88–116 (QAID…KIRL), 117–141 (CKCH…KTIL), and 142–173 (EMEI…LSDL). Threonine 93 provides a ligand contact to Mg(2+).

Belongs to the ATP synthase subunit s family. Homotetramer. Associates with ATP synthase.

It is found in the mitochondrion. It localises to the mitochondrion inner membrane. Involved in regulation of mitochondrial membrane ATP synthase. Necessary for H(+) conduction of ATP synthase. Facilitates energy-driven catalysis of ATP synthesis by blocking a proton leak through an alternative proton exit pathway. This chain is ATP synthase subunit s, mitochondrial (DMAC2L), found in Pongo abelii (Sumatran orangutan).